Consider the following 411-residue polypeptide: S-inosyl-L-homocysteine hydrolase (411 aa).

The substrate site is built by Asp121 and Glu146. 147–149 provides a ligand contact to NAD(+); sequence TTT. Lys176 and Asp180 together coordinate substrate. Residues Asn181, 210 to 215, Glu233, Asn268, 289 to 291, and Asn335 each bind NAD(+); these read GYGWCG and SGH.

It belongs to the adenosylhomocysteinase family. It depends on NAD(+) as a cofactor.

It is found in the cytoplasm. It carries out the reaction S-inosyl-L-homocysteine + H2O = L-homocysteine + inosine. The protein operates within amino-acid biosynthesis; S-adenosyl-L-methionine biosynthesis. In terms of biological role, catalyzes the hydrolysis of S-inosyl-L-homocysteine (SIH) to L-homocysteine (Hcy) and inosine. Likely functions in a S-adenosyl-L-methionine (SAM) recycling pathway from S-adenosyl-L-homocysteine (SAH) produced from SAM-dependent methylation reactions. Can also catalyze the reverse reaction in vitro, i.e. the synthesis of SIH from Hcy and inosine. This is S-inosyl-L-homocysteine hydrolase from Methanosarcina mazei (strain ATCC BAA-159 / DSM 3647 / Goe1 / Go1 / JCM 11833 / OCM 88) (Methanosarcina frisia).